A 276-amino-acid chain; its full sequence is Large ribosomal subunit protein uL2 (276 aa).

The disordered stretch occupies residues 224–276; that stretch reads VMNPVDHPHGGGEGKAPIGRKSPMTPWGKPTLGYKTRKKKNKSDKFIIRRRKK. A compositionally biased stretch (basic residues) spans 258-276; that stretch reads KTRKKKNKSDKFIIRRRKK.

Belongs to the universal ribosomal protein uL2 family. Part of the 50S ribosomal subunit. Forms a bridge to the 30S subunit in the 70S ribosome.

Functionally, one of the primary rRNA binding proteins. Required for association of the 30S and 50S subunits to form the 70S ribosome, for tRNA binding and peptide bond formation. It has been suggested to have peptidyltransferase activity; this is somewhat controversial. Makes several contacts with the 16S rRNA in the 70S ribosome. This chain is Large ribosomal subunit protein uL2, found in Geobacillus kaustophilus (strain HTA426).